Reading from the N-terminus, the 154-residue chain is Transcriptional repressor NrdR (154 aa).

Residues 3 to 34 (CPFCNAPDTKVIDSRLATEGAQVRRRRECMSC) fold into a zinc finger. The ATP-cone domain occupies 49–139 (PRVIKSDGNR…VYRSFQDVNA (91 aa)).

It belongs to the NrdR family. Requires Zn(2+) as cofactor.

Functionally, negatively regulates transcription of bacterial ribonucleotide reductase nrd genes and operons by binding to NrdR-boxes. This Hydrogenovibrio crunogenus (strain DSM 25203 / XCL-2) (Thiomicrospira crunogena) protein is Transcriptional repressor NrdR.